A 689-amino-acid polypeptide reads, in one-letter code: DNA ligase (689 aa).

Residues 40–44 (DAEYD), 89–90 (SL), and Glu121 contribute to the NAD(+) site. Lys123 functions as the N6-AMP-lysine intermediate in the catalytic mechanism. 4 residues coordinate NAD(+): Arg144, Glu179, Lys295, and Lys319. Zn(2+) contacts are provided by Cys413, Cys416, Cys431, and Cys437. The region spanning 610-689 (KEHSSLTGKI…EEWLTIVNNV (80 aa)) is the BRCT domain.

It belongs to the NAD-dependent DNA ligase family. LigA subfamily. Requires Mg(2+) as cofactor. It depends on Mn(2+) as a cofactor.

The enzyme catalyses NAD(+) + (deoxyribonucleotide)n-3'-hydroxyl + 5'-phospho-(deoxyribonucleotide)m = (deoxyribonucleotide)n+m + AMP + beta-nicotinamide D-nucleotide.. DNA ligase that catalyzes the formation of phosphodiester linkages between 5'-phosphoryl and 3'-hydroxyl groups in double-stranded DNA using NAD as a coenzyme and as the energy source for the reaction. It is essential for DNA replication and repair of damaged DNA. In Rickettsia canadensis (strain McKiel), this protein is DNA ligase.